Here is a 1860-residue protein sequence, read N- to C-terminus: Golgi-specific brefeldin A-resistance guanine nucleotide exchange factor 1 (1860 aa).

Residues 1–211 (MVDKNIYIIQ…EPKNYVGTNM (211 aa)) form a DCB; DCB:DCB domain and DCB:HUS domain interaction region. Residues 1–381 (MVDKNIYIIQ…SVHDMDYVNP (381 aa)) form an interaction with RAB1B region. 2 disordered regions span residues 215–266 (KMRA…GGMP) and 281–372 (AASA…DSAS). Over residues 227–241 (WKKQKRSPRPPRHMT) the composition is skewed to basic residues. Polar residues-rich tracts occupy residues 250 to 262 (PTPN…SNLT), 290 to 301 (TDSGLEFSSQTT), and 335 to 351 (DLQQ…SASV). A phosphoserine mark is found at serine 350 and serine 353. Phosphothreonine is present on threonine 508. The segment at 531 to 551 (RIPSFVTELYINYDCDYYCSN) is HUS; DCB:HUS domain interaction. The segment covering 620 to 631 (TREASNTERTAS) has biased composition (basic and acidic residues). The segment at 620–666 (TREASNTERTASDGKAVGMASDIPGLHLPGGGRLPPEHGKSGCSDLE) is disordered. Serine 663 bears the Phosphoserine mark. The 191-residue stretch at 693-883 (ELIEIKNKKK…EDMYHAIKNE (191 aa)) folds into the SEC7 domain. The interval 887–1371 (MPEEQTGLVR…PSRPGPSPLI (485 aa)) is phosphatidylinositol-phosphate binding; required for translocation to the leading edge and for ARF1 activation upon GPCR signaling. The segment covering 1285 to 1297 (QATARADAPDAGA) has biased composition (low complexity). Residues 1285–1336 (QATARADAPDAGAQSDSELPSYHQNDVSLDRGYTSDSEVYTDHGRPGKIHRS) are disordered. A compositionally biased stretch (polar residues) spans 1298 to 1311 (QSDSELPSYHQNDV). Serine 1299 is subject to Phosphoserine. Tyrosine 1317 is modified (phosphotyrosine). A phosphoserine mark is found at serine 1319, serine 1321, and serine 1336. Threonine 1338 carries the post-translational modification Phosphothreonine; by AMPK. 3 disordered regions span residues 1351–1371 (GKDD…SPLI), 1431–1484 (CKSQ…DEGV), and 1726–1809 (PMPM…QPPL). The segment covering 1433–1447 (SQEKRGKSHKYDSKG) has biased composition (basic and acidic residues). Positions 1465–1474 (TSSQHASRGG) are enriched in polar residues. Residues serine 1476, serine 1774, and serine 1785 each carry the phosphoserine modification. Low complexity predominate over residues 1775 to 1792 (PRAASSSSPGSPVASSPS).

As to quaternary structure, can form homodimers and probably homotetramers. Interacts with COPG1; the interaction is independent of ARF1 activation. Interacts with ARF1, ARF3, ARF4 and ARF5. Interacts with RAB1B (GTP-bound form); required for GBF1 membrane association. Interacts with GGA1, GGA2 and GGA3. Interacts with USO1. Interacts (via SEC7 domain) with PNPLA2 (via C-terminus); the interaction is direct. Interacts with ARMH3. In terms of assembly, (Microbial infection) Interacts with poliovirus protein 3A. In terms of processing, AMPK-mediated phosphorylation at Thr-1338 is induced by 2-deoxyglucose (2-DG) and AICA ribonucleotide, and occurs during mitosis leading to membrane disassociation and inactivation of ARF1 during mitosis. Ubiquitous.

The protein resides in the golgi apparatus. The protein localises to the cis-Golgi network. It is found in the endoplasmic reticulum-Golgi intermediate compartment. Its subcellular location is the trans-Golgi network. It localises to the cytoplasm. The protein resides in the lipid droplet. The protein localises to the membrane. Inhibited by brefeldin A (BFA). Inhibited by golgicide A (GCA). Guanine-nucleotide exchange factor (GEF) for members of the Arf family of small GTPases involved in trafficking in the early secretory pathway; its GEF activity initiates the coating of nascent vesicles via the localized generation of activated ARFs through replacement of GDP with GTP. Recruitment to cis-Golgi membranes requires membrane association of Arf-GDP and can be regulated by ARF1, ARF3, ARF4 and ARF5. Involved in the recruitment of the COPI coat complex to the endoplasmic reticulum exit sites (ERES), and the endoplasmic reticulum-Golgi intermediate (ERGIC) and cis-Golgi compartments which implicates ARF1 activation. Involved in COPI vesicle-dependent retrograde transport from the ERGIC and cis-Golgi compartments to the endoplasmic reticulum (ER). Involved in the trans-Golgi network recruitment of GGA1, GGA2, GGA3, BIG1, BIG2, and the AP-1 adaptor protein complex related to chlathrin-dependent transport; the function requires its GEF activity (probably at least in part on ARF4 and ARF5). Has GEF activity towards ARF1. Has in vitro GEF activity towards ARF5. Involved in the processing of PSAP. Required for the assembly of the Golgi apparatus. The AMPK-phosphorylated form is involved in Golgi disassembly during mitotis and under stress conditions. May be involved in the COPI vesicle-dependent recruitment of PNPLA2 to lipid droplets; however, this function is under debate. In neutrophils, involved in G protein-coupled receptor (GPCR)-mediated chemotaxis und superoxide production. Proposed to be recruited by phosphatidylinositol-phosphates generated upon GPCR stimulation to the leading edge where it recruits and activates ARF1, and is involved in recruitment of GIT2 and the NADPH oxidase complex. Plays a role in maintaining mitochondrial morphology. The sequence is that of Golgi-specific brefeldin A-resistance guanine nucleotide exchange factor 1 (GBF1) from Homo sapiens (Human).